The following is a 1407-amino-acid chain: DNA-directed RNA polymerase subunit beta' (1407 aa).

Cys-70, Cys-72, Cys-85, and Cys-88 together coordinate Zn(2+). The Mg(2+) site is built by Asp-460, Asp-462, and Asp-464. Positions 814, 888, 895, and 898 each coordinate Zn(2+).

It belongs to the RNA polymerase beta' chain family. The RNAP catalytic core consists of 2 alpha, 1 beta, 1 beta' and 1 omega subunit. When a sigma factor is associated with the core the holoenzyme is formed, which can initiate transcription. Mg(2+) serves as cofactor. It depends on Zn(2+) as a cofactor.

The enzyme catalyses RNA(n) + a ribonucleoside 5'-triphosphate = RNA(n+1) + diphosphate. DNA-dependent RNA polymerase catalyzes the transcription of DNA into RNA using the four ribonucleoside triphosphates as substrates. This Salmonella choleraesuis (strain SC-B67) protein is DNA-directed RNA polymerase subunit beta'.